Here is a 359-residue protein sequence, read N- to C-terminus: Protein RecA (359 aa).

An ATP-binding site is contributed by 74–81; the sequence is GPESSGKT.

The protein belongs to the RecA family.

The protein localises to the cytoplasm. Can catalyze the hydrolysis of ATP in the presence of single-stranded DNA, the ATP-dependent uptake of single-stranded DNA by duplex DNA, and the ATP-dependent hybridization of homologous single-stranded DNAs. It interacts with LexA causing its activation and leading to its autocatalytic cleavage. The chain is Protein RecA from Anaplasma marginale (strain St. Maries).